The following is a 548-amino-acid chain: Frizzled-7-B (548 aa).

Residues M1 to S18 form the signal peptide. The Extracellular portion of the chain corresponds to A19–W230. One can recognise an FZ domain in the interval P31–Q150. 5 disulfides stabilise this stretch: C36–C97, C44–C90, C81–C118, C107–C147, and C111–C135. N50 carries N-linked (GlcNAc...) asparagine glycosylation. N-linked (GlcNAc...) asparagine glycosylation is present at N151. A helical membrane pass occupies residues V231 to V251. The Cytoplasmic portion of the chain corresponds to D252–P262. The chain crosses the membrane as a helical span at residues I263–L283. Residues E284–T311 lie on the Extracellular side of the membrane. A helical transmembrane segment spans residues I312 to A332. At L333–Q353 the chain is on the cytoplasmic side. The helical transmembrane segment at Y354–G374 threads the bilayer. At Q375–G397 the chain is on the extracellular side. Residues F398–F418 form a helical membrane-spanning segment. Residues V419–R444 lie on the Cytoplasmic side of the membrane. A helical transmembrane segment spans residues I445 to Y465. Residues E466 to T502 are Extracellular-facing. Residues V503–W523 form a helical membrane-spanning segment. Topologically, residues S524–V548 are cytoplasmic. Positions K526–W531 match the Lys-Thr-X-X-X-Trp motif, mediates interaction with the PDZ domain of Dvl family members motif. The PDZ-binding motif lies at T546–V548.

The protein belongs to the G-protein coupled receptor Fz/Smo family. As to quaternary structure, interacts with wnt11 and sdc4. The extracellular domain interacts with the extracellular domain of pcdh8/papc. Interacts (via C-terminus) with dvl1 (via PDZ domain). In terms of tissue distribution, during gastrulation, broadly expressed on the dorsal side of the embryo in deep mesodermal cells surrounding the blastopore lip and in presumptive anterior neuroectoderm. During neurulation, localized to the cranial neural crest and heart field where expression is retained at later stages in addition to new areas of expression in the neural tube, pronephros and tailbud. At tailbud stage, expressed in the pronephric duct, and broad head expression becomes more restricted to the hindbrain. In tadpoles, strongly expressed in the eye and the pericardium and myocardium of the developing heart.

It is found in the cell membrane. The protein resides in the endosome membrane. Functionally, receptor for Wnt proteins. Acts in both canonical and non-canonical Wnt pathways. Although different papers report differing Wnt preferences, wnt5a, wnt8b and wnt11 have been proposed as synergists. In the canonical Wnt pathway, acts via beta-catenin to promote the expression of the dorsal genes siamois, twin and nodal3 and to establish the dorsal axis of the embryo and induce dorsal mesoderm formation. In a non-canonical Wnt/planar cell polarity (PCP) pathway, acts with sdc4 and dvl2/dsh to regulate convergent extension cell movements during gastrulation. Triggers phosphorylation of dvl2/dsh and its translocation to the plasma membrane. In a third branch of Wnt signaling, acts in a non-canonical pathway via trimeric G proteins, and independently of dvl2/dsh, to recruit protein kinase C (PKC) to the membrane and thus activate PKC. PKC signaling controls cell sorting and tissue separation during gastrulation. The chain is Frizzled-7-B (fzd7-b) from Xenopus laevis (African clawed frog).